The following is a 130-amino-acid chain: MNGKYYYGTGRRKSSVARVFLTKGTGQIIVNGRPVDEFFARETSRMVVRQPLVLTENAESLDIKVNVVGGGETGQSGAIRHGITRALIDFDAALKPALSQAGFVTRDAREVERKKPGLRKARRAKQFSKR.

Belongs to the universal ribosomal protein uS9 family.

This Neisseria gonorrhoeae (strain ATCC 700825 / FA 1090) protein is Small ribosomal subunit protein uS9.